A 364-amino-acid polypeptide reads, in one-letter code: Alanine racemase (364 aa).

Residue Lys-34 is the Proton acceptor; specific for D-alanine of the active site. Residue Lys-34 is modified to N6-(pyridoxal phosphate)lysine. Arg-129 lines the substrate pocket. The active-site Proton acceptor; specific for L-alanine is the Tyr-259. A substrate-binding site is contributed by Met-307.

It belongs to the alanine racemase family. It depends on pyridoxal 5'-phosphate as a cofactor.

It carries out the reaction L-alanine = D-alanine. It functions in the pathway amino-acid biosynthesis; D-alanine biosynthesis; D-alanine from L-alanine: step 1/1. Functionally, catalyzes the interconversion of L-alanine and D-alanine. May also act on other amino acids. The protein is Alanine racemase (alr) of Coxiella burnetii (strain CbuK_Q154) (Coxiella burnetii (strain Q154)).